Reading from the N-terminus, the 293-residue chain is Bifunctional protein FolD (293 aa).

Residues 164 to 166, S193, and T234 contribute to the NADP(+) site; that span reads GRS.

It belongs to the tetrahydrofolate dehydrogenase/cyclohydrolase family. In terms of assembly, homodimer.

The enzyme catalyses (6R)-5,10-methylene-5,6,7,8-tetrahydrofolate + NADP(+) = (6R)-5,10-methenyltetrahydrofolate + NADPH. It catalyses the reaction (6R)-5,10-methenyltetrahydrofolate + H2O = (6R)-10-formyltetrahydrofolate + H(+). Its pathway is one-carbon metabolism; tetrahydrofolate interconversion. In terms of biological role, catalyzes the oxidation of 5,10-methylenetetrahydrofolate to 5,10-methenyltetrahydrofolate and then the hydrolysis of 5,10-methenyltetrahydrofolate to 10-formyltetrahydrofolate. This is Bifunctional protein FolD from Bacteroides fragilis (strain ATCC 25285 / DSM 2151 / CCUG 4856 / JCM 11019 / LMG 10263 / NCTC 9343 / Onslow / VPI 2553 / EN-2).